The chain runs to 361 residues: Outer mitochondrial transmembrane helix translocase (361 aa).

The Mitochondrial intermembrane portion of the chain corresponds to 1–15 (MVHAETFSRPLSRNE). A helical transmembrane segment spans residues 16–32 (VVGLIFRLTIFGAVTYF). Residues 33-361 (TIKWMVDAID…QNVLTHVCLD (329 aa)) are Cytoplasmic-facing. ATP is bound at residue 133 to 140 (GPPGCGKT). Position 322 is a phosphoserine (Ser322).

The protein belongs to the AAA ATPase family. MSP1 subfamily. As to quaternary structure, interacts with GRIA2 and GRIP1 in an ATP-dependent manner. ATAD1-catalyzed ATP hydrolysis disrupts not only its binding to GRIA2 and GRIP1, but also interaction between GRIP1 and GRIA2, leading to AMPAR complex disassembly.

It localises to the mitochondrion outer membrane. The protein localises to the peroxisome membrane. The protein resides in the postsynaptic cell membrane. The enzyme catalyses [protein]-with a C-terminal TM segment(out) + ATP + H2O = [protein]-with a C-terminal TM segment(in) + ADP + phosphate + H(+). Outer mitochondrial translocase required to remove mislocalized tail-anchored transmembrane proteins on mitochondria. Specifically recognizes and binds tail-anchored transmembrane proteins: acts as a dislocase that mediates the ATP-dependent extraction of mistargeted tail-anchored transmembrane proteins from the mitochondrion outer membrane. Also plays a critical role in regulating the surface expression of AMPA receptors (AMPAR), thereby regulating synaptic plasticity and learning and memory. Required for NMDA-stimulated AMPAR internalization and inhibition of GRIA1 and GRIA2 recycling back to the plasma membrane; these activities are ATPase-dependent. This is Outer mitochondrial transmembrane helix translocase from Bos taurus (Bovine).